Consider the following 162-residue polypeptide: Nitric oxide synthase, inducible (162 aa).

The segment covering 24–37 (LQYHSLSKQQNESP) has biased composition (polar residues). A disordered region spans residues 24–65 (LQYHSLSKQQNESPQPLVGTGKKSPESLVKPDATPLSSPRHV). 2 residues coordinate Zn(2+): Cys-90 and Cys-95. Ser-98 lines the (6R)-L-erythro-5,6,7,8-tetrahydrobiopterin pocket. L-arginine is bound at residue Glu-132. His-160 provides a ligand contact to FAD.

The protein belongs to the NOS family. In terms of assembly, homodimer. Interacts with NHERF1. Interacts with GAPDH; induced by oxidatively-modified low-densitity lipoprotein (LDL(ox)). Interacts with S100A8 and S100A9 to form the iNOS-S100A8/9 transnitrosylase complex. Interacts with SPSB1, SPSB2 and SPSB4. Interacts with ELOC and CUL5 in the presence of SPSB1 or SPSB2 or SPSB4. Forms a complex with ASL, ASS1 and HSP90AA1; the complex regulates cell-autonomous L-arginine synthesis and citrulline recycling while channeling extracellular L-arginine to nitric oxide synthesis pathway. Requires heme b as cofactor. The cofactor is FAD. FMN is required as a cofactor. (6R)-L-erythro-5,6,7,8-tetrahydrobiopterin serves as cofactor. In terms of processing, polyubiquitinated; mediated by SPSB1, SPSB2 and SPSB4, leading to proteasomal degradation.

The protein resides in the cytoplasm. The protein localises to the cytosol. The enzyme catalyses 2 L-arginine + 3 NADPH + 4 O2 + H(+) = 2 L-citrulline + 2 nitric oxide + 3 NADP(+) + 4 H2O. With respect to regulation, regulated by calcium/calmodulin. In terms of biological role, produces nitric oxide (NO) which is a messenger molecule with diverse functions throughout the body. In macrophages, NO mediates tumoricidal and bactericidal actions. Also has nitrosylase activity and mediates cysteine S-nitrosylation of cytoplasmic target proteins such PTGS2/COX2. As component of the iNOS-S100A8/9 transnitrosylase complex involved in the selective inflammatory stimulus-dependent S-nitrosylation of GAPDH implicated in regulation of the GAIT complex activity and probably multiple targets including ANXA5, EZR, MSN and VIM. Involved in inflammation, enhances the synthesis of pro-inflammatory mediators such as IL6 and IL8. In Macaca mulatta (Rhesus macaque), this protein is Nitric oxide synthase, inducible (NOS2).